The chain runs to 364 residues: B3 domain-containing protein At5g38490 (364 aa).

The segment at 148–202 (ASTSSSSLLNLPCLEPSTETKDVPNPNYQSSSPSSCLTGKTNRKRRAVEQRKSGK) is disordered. The TF-B3 DNA-binding region spans 260 to 364 (FQKLIRNDFL…GVLCFALDTE (105 aa)).

It localises to the nucleus. This Arabidopsis thaliana (Mouse-ear cress) protein is B3 domain-containing protein At5g38490.